Reading from the N-terminus, the 386-residue chain is Succinate--CoA ligase [ADP-forming] subunit beta (386 aa).

In terms of domain architecture, ATP-grasp spans 9-244; the sequence is KEVLRKYGVA…LDEEDPKEIE (236 aa). Residues Lys-46, 53–55, Glu-99, Cys-102, and Glu-107 each bind ATP; that span reads GRG. Mg(2+)-binding residues include Asn-199 and Asp-213. Substrate contacts are provided by residues Asn-264 and 321–323; that span reads GIM.

It belongs to the succinate/malate CoA ligase beta subunit family. In terms of assembly, heterotetramer of two alpha and two beta subunits. The cofactor is Mg(2+).

The enzyme catalyses succinate + ATP + CoA = succinyl-CoA + ADP + phosphate. It catalyses the reaction GTP + succinate + CoA = succinyl-CoA + GDP + phosphate. It functions in the pathway carbohydrate metabolism; tricarboxylic acid cycle; succinate from succinyl-CoA (ligase route): step 1/1. In terms of biological role, succinyl-CoA synthetase functions in the citric acid cycle (TCA), coupling the hydrolysis of succinyl-CoA to the synthesis of either ATP or GTP and thus represents the only step of substrate-level phosphorylation in the TCA. The beta subunit provides nucleotide specificity of the enzyme and binds the substrate succinate, while the binding sites for coenzyme A and phosphate are found in the alpha subunit. In Bacillus licheniformis (strain ATCC 14580 / DSM 13 / JCM 2505 / CCUG 7422 / NBRC 12200 / NCIMB 9375 / NCTC 10341 / NRRL NRS-1264 / Gibson 46), this protein is Succinate--CoA ligase [ADP-forming] subunit beta.